The primary structure comprises 172 residues: MDLKQYVSEVQDWPKPGVSFKDITTIMDNGEAYGYATDQIVKYAKDRDVDVVVGPEARGFIIGCPVAYSMGIGFAPVRKEGKLPREVIRYEYDLEYGTNILTMHNDAIKPGQRVLITDDLLATGGTIEAAIKLVEKLGGIVVGIAFIIELKYLNGIEKIKDYDVMSLISYDE.

The protein belongs to the purine/pyrimidine phosphoribosyltransferase family. Homodimer.

It is found in the cytoplasm. The catalysed reaction is AMP + diphosphate = 5-phospho-alpha-D-ribose 1-diphosphate + adenine. The protein operates within purine metabolism; AMP biosynthesis via salvage pathway; AMP from adenine: step 1/1. Its function is as follows. Catalyzes a salvage reaction resulting in the formation of AMP, that is energically less costly than de novo synthesis. The polypeptide is Adenine phosphoribosyltransferase (Staphylococcus haemolyticus (strain JCSC1435)).